The chain runs to 199 residues: Nucleoside triphosphate pyrophosphatase (199 aa).

The Proton acceptor role is filled by aspartate 76.

This sequence belongs to the Maf family. It depends on a divalent metal cation as a cofactor.

It localises to the cytoplasm. The catalysed reaction is a ribonucleoside 5'-triphosphate + H2O = a ribonucleoside 5'-phosphate + diphosphate + H(+). It catalyses the reaction a 2'-deoxyribonucleoside 5'-triphosphate + H2O = a 2'-deoxyribonucleoside 5'-phosphate + diphosphate + H(+). In terms of biological role, nucleoside triphosphate pyrophosphatase. May have a dual role in cell division arrest and in preventing the incorporation of modified nucleotides into cellular nucleic acids. The protein is Nucleoside triphosphate pyrophosphatase of Roseobacter denitrificans (strain ATCC 33942 / OCh 114) (Erythrobacter sp. (strain OCh 114)).